Here is a 429-residue protein sequence, read N- to C-terminus: Phosphomethylpyrimidine synthase (429 aa).

Substrate contacts are provided by residues Asn66, Met95, Tyr124, His163, Ser185–Gly187, Asp226–Arg229, and Glu265. Position 269 (His269) interacts with Zn(2+). Position 292 (Tyr292) interacts with substrate. His333 contributes to the Zn(2+) binding site. Residues Cys407, Cys410, and Cys414 each contribute to the [4Fe-4S] cluster site.

This sequence belongs to the ThiC family. It depends on [4Fe-4S] cluster as a cofactor.

The catalysed reaction is 5-amino-1-(5-phospho-beta-D-ribosyl)imidazole + S-adenosyl-L-methionine = 4-amino-2-methyl-5-(phosphooxymethyl)pyrimidine + CO + 5'-deoxyadenosine + formate + L-methionine + 3 H(+). It participates in cofactor biosynthesis; thiamine diphosphate biosynthesis. In terms of biological role, catalyzes the synthesis of the hydroxymethylpyrimidine phosphate (HMP-P) moiety of thiamine from aminoimidazole ribotide (AIR) in a radical S-adenosyl-L-methionine (SAM)-dependent reaction. This chain is Phosphomethylpyrimidine synthase, found in Pyrococcus furiosus (strain ATCC 43587 / DSM 3638 / JCM 8422 / Vc1).